A 212-amino-acid polypeptide reads, in one-letter code: uncharacterized protein (212 aa).

The next 2 membrane-spanning stretches (helical) occupy residues 54-74 (LCFA…GYAG) and 79-99 (WIIC…ALLL).

The protein localises to the cell membrane. This is an uncharacterized protein from Chlamydia pneumoniae (Chlamydophila pneumoniae).